Consider the following 660-residue polypeptide: Epithelial sodium channel subunit gamma (660 aa).

Over 1 to 55 (MSKSGKKLTQKLKKNLPVTGPQAPTLYELMQWYCLNTNTHGCRRIVVSKGRLRRW) the chain is Cytoplasmic. A helical membrane pass occupies residues 56–76 (IWISLTLCAVAVIFWQCALLL). The Extracellular segment spans residues 77–537 (MSYYSVSASI…VTLLSNFGGQ (461 aa)). Cystine bridges form between Cys-101–Cys-286, Cys-209–Cys-217, Cys-263–Cys-270, Cys-375–Cys-460, Cys-397–Cys-456, Cys-401–Cys-452, Cys-410–Cys-437, and Cys-412–Cys-426. The helical transmembrane segment at 538–558 (LGLWMSCSMICVLEIIEVFFI) threads the bilayer. The Cytoplasmic segment spans residues 559-660 (DSFWVVLRQR…IDSDEDVERL (102 aa)).

Belongs to the amiloride-sensitive sodium channel (TC 1.A.6) family. SCNN1G subfamily. Component of the heterotrimeric epithelial sodium channel (ENaC) composed of an alpha/SCNN1A, a beta/SCNN1B and a gamma/SCNN1G subunit.

It is found in the apical cell membrane. The catalysed reaction is Na(+)(in) = Na(+)(out). Originally identified and characterized by its inhibition by the diuretic drug amiloride. Its function is as follows. This is one of the three pore-forming subunits of the heterotrimeric epithelial sodium channel (ENaC), a critical regulator of sodium balance and fluid homeostasis. ENaC operates in epithelial tissues, where it mediates the electrodiffusion of sodium ions from extracellular fluid through the apical membrane of cells, with water following osmotically. The chain is Epithelial sodium channel subunit gamma (scnn1g-a) from Xenopus laevis (African clawed frog).